The sequence spans 392 residues: tRNA (guanine-N(7)-)-methyltransferase (392 aa).

S-adenosyl-L-methionine contacts are provided by Glu123, Glu148, and Asp175. Residues Lys201 and Asp231 each coordinate substrate.

Belongs to the class I-like SAM-binding methyltransferase superfamily. TrmB family.

It carries out the reaction guanosine(46) in tRNA + S-adenosyl-L-methionine = N(7)-methylguanosine(46) in tRNA + S-adenosyl-L-homocysteine. The protein operates within tRNA modification; N(7)-methylguanine-tRNA biosynthesis. Functionally, catalyzes the formation of N(7)-methylguanine at position 46 (m7G46) in tRNA. The polypeptide is tRNA (guanine-N(7)-)-methyltransferase (Campylobacter jejuni (strain RM1221)).